The chain runs to 310 residues: tRNA-cytidine(32) 2-sulfurtransferase (310 aa).

Residues 47 to 52 carry the PP-loop motif motif; sequence SGGKDS. Residues C122, C125, and C213 each coordinate [4Fe-4S] cluster.

It belongs to the TtcA family. Homodimer. Requires Mg(2+) as cofactor. It depends on [4Fe-4S] cluster as a cofactor.

It localises to the cytoplasm. It catalyses the reaction cytidine(32) in tRNA + S-sulfanyl-L-cysteinyl-[cysteine desulfurase] + AH2 + ATP = 2-thiocytidine(32) in tRNA + L-cysteinyl-[cysteine desulfurase] + A + AMP + diphosphate + H(+). It functions in the pathway tRNA modification. Functionally, catalyzes the ATP-dependent 2-thiolation of cytidine in position 32 of tRNA, to form 2-thiocytidine (s(2)C32). The sulfur atoms are provided by the cysteine/cysteine desulfurase (IscS) system. This is tRNA-cytidine(32) 2-sulfurtransferase from Cronobacter sakazakii (strain ATCC BAA-894) (Enterobacter sakazakii).